Reading from the N-terminus, the 449-residue chain is MQAQEVRLLYLFREDGVVTNDLEARVLRKITFRIVPFIMLLYFIAFLDRVNIGFAALTMNQDLGFSSTVFGIGAGIFFVGYFLFEVPSNLILNKVGARIWIARVMITWGIVSGLMAFVQGTTSFYILRFLLGVAEAGFFPGIILYLSFWFPARRRAAVTALFMAAAPLSTVLGSPISGALMEMHGLMGLAGWQWMFLIEAAPALILGVVVLFFLTDRPEKAKWLTEEERNWLVKTMNAEQAGRGTASHSVMAGLADIRVIALALVYFGTSAGLYTLGIWAPQIIKQFGLSAIEVGFINAVPGIFAVVAMVLWARHSDRTGERTWHVVGACLLAAAGLAFAAGATSVFMVLIALTIVNVGISCSKPPLWSMPTMFLSGPAAAAGIATINSIGNLGGFVGPSMIGWIKDTTGSFTGGLYFVAGLLLISAILTLILARSSPKAVETRTANQH.

The next 11 membrane-spanning stretches (helical) occupy residues 34-54 (IVPFIMLLYFIAFLDRVNIGF), 64-84 (GFSSTVFGIGAGIFFVGYFLF), 99-119 (IWIARVMITWGIVSGLMAFVQ), 130-150 (LLGVAEAGFFPGIILYLSFWF), 156-176 (AAVTALFMAAAPLSTVLGSPI), 194-214 (WMFLIEAAPALILGVVVLFFL), 259-279 (VIALALVYFGTSAGLYTLGIW), 292-312 (IEVGFINAVPGIFAVVAMVLW), 336-356 (GLAFAAGATSVFMVLIALTIV), 367-387 (LWSMPTMFLSGPAAAAGIATI), and 414-434 (GGLYFVAGLLLISAILTLILA).

This sequence belongs to the major facilitator superfamily. Phthalate permease family.

Its subcellular location is the cell membrane. Component of the tartrate utilization system and may allow entry of tartrate and tartrate dehydrogenase. The chain is Putative tartrate transporter (ttuB) from Agrobacterium vitis (Rhizobium vitis).